A 657-amino-acid chain; its full sequence is Protein mono-ADP-ribosyltransferase TIPARP (657 aa).

Residues 1–10 (MEMETTEPEP) show a composition bias toward acidic residues. The segment at 1–21 (MEMETTEPEPDCVVQPPSPPD) is disordered. The residue at position 39 (C39) is an ADP-ribosylcysteine. Residues 41-47 (KKKDQKR) carry the Nuclear localization signal motif. The segment at 237 to 264 (ENGIEICMDFLQGTCIYGRDCLKHHTVL) adopts a C3H1-type zinc-finger fold. The region spanning 332 to 410 (STPPSSNVNS…RRPLFRSCFI (79 aa)) is the WWE domain. The 209-residue stretch at 449–657 (YPETWVYMHP…YEEVSNTVSI (209 aa)) folds into the PARP catalytic domain.

The protein belongs to the ARTD/PARP family. As to quaternary structure, interacts with AHR. Post-translationally, auto-mono-ADP-ribosylated.

It localises to the nucleus. It carries out the reaction L-aspartyl-[protein] + NAD(+) = 4-O-(ADP-D-ribosyl)-L-aspartyl-[protein] + nicotinamide. The catalysed reaction is L-glutamyl-[protein] + NAD(+) = 5-O-(ADP-D-ribosyl)-L-glutamyl-[protein] + nicotinamide. It catalyses the reaction L-cysteinyl-[protein] + NAD(+) = S-(ADP-D-ribosyl)-L-cysteinyl-[protein] + nicotinamide + H(+). With respect to regulation, ADP-ribosyltransferase activity is inhibited by PJ34; inhibition is however not specific to TIPARP and other PARP-domain containing proteins are also inhibited by PJ34. Partially inhibited by KU0058948. Its function is as follows. ADP-ribosyltransferase that mediates mono-ADP-ribosylation of glutamate, aspartate and cysteine residues on target proteins. Acts as a negative regulator of AHR by mediating mono-ADP-ribosylation of AHR, leading to inhibit transcription activator activity of AHR. The polypeptide is Protein mono-ADP-ribosyltransferase TIPARP (Homo sapiens (Human)).